The primary structure comprises 291 residues: Probable cell wall amidase LytH (291 aa).

Positions 1–40 (MKKIDSWLTKHGLKNRLTLVVIVIFIIFLILLFMFVNLSD) are cleaved as a signal peptide. One can recognise an SH3b domain in the interval 41 to 105 (EDTGQITITE…WVAGWHTNLN (65 aa)). Residues 122–286 (IVLDPGHGGS…VEQAIVDGLK (165 aa)) form the MurNAc-LAA domain. Residues 123 to 147 (VLDPGHGGSDQGASSSTPSKSLEKN) form a disordered region. Over residues 133–142 (QGASSSTPSK) the composition is skewed to polar residues.

This sequence belongs to the N-acetylmuramoyl-L-alanine amidase 3 family.

The protein resides in the secreted. Functionally, probably involved in cell-wall metabolism. The chain is Probable cell wall amidase LytH (lytH) from Staphylococcus epidermidis (strain ATCC 12228 / FDA PCI 1200).